The sequence spans 515 residues: Maturase K (515 aa).

It belongs to the intron maturase 2 family. MatK subfamily.

The protein resides in the plastid. Its subcellular location is the chloroplast. Functionally, usually encoded in the trnK tRNA gene intron. Probably assists in splicing its own and other chloroplast group II introns. The protein is Maturase K of Pinus pumila (Dwarf Siberian pine).